A 727-amino-acid polypeptide reads, in one-letter code: Protein edg-1 (727 aa).

The interval 703 to 727 (FAESSVKPTTSSAYGNSSNFSRYAD) is disordered.

May interact with deps-1 and prg-1.

It is found in the cytoplasmic granule. Its function is as follows. Plays a role in regulating deps-1 cluster formation in the germline. This chain is Protein edg-1, found in Caenorhabditis elegans.